Here is a 38-residue protein sequence, read N- to C-terminus: Histone H5 (38 aa).

Positions 1-15 (TESPIPVPAPAPAAK) are enriched in pro residues. The disordered stretch occupies residues 1-38 (TESPIPVPAPAPAAKPKPKRVSKRPASHPPYSDMIAAA). A compositionally biased stretch (basic residues) spans 16–26 (PKPKRVSKRPA).

This sequence belongs to the histone H1/H5 family. Erythroid cells.

It localises to the nucleus. The protein resides in the chromosome. Its function is as follows. Histone H5 performs the same function as H1, being necessary for the condensation of nucleosome chains into higher order structures, and replaces histone H1 in certain cells. This Columba livia (Rock dove) protein is Histone H5.